The primary structure comprises 579 residues: Golvesin (579 aa).

The required for targeting to the plasma membrane stretch occupies residues Met-1–Asn-75. The tract at residues Met-1–Gly-79 is disordered. Residues Met-1–Lys-94 are Lumenal-facing. Residues Ile-11 to Asn-77 are compositionally biased toward low complexity. The chain crosses the membrane as a helical; Signal-anchor for type III membrane protein span at residues Ile-95–Ser-115. Residues Ile-95–Phe-118 are required for membrane targeting. Residues Leu-116–Pro-578 lie on the Cytoplasmic side of the membrane. The required for transfer to endosomes and contractile vacuoles; the protein is trapped in the Golgi stretch occupies residues Trp-559 to Glu-579.

The protein localises to the contractile vacuole membrane. It localises to the endosome membrane. Its subcellular location is the golgi apparatus membrane. This Dictyostelium discoideum (Social amoeba) protein is Golvesin (gol).